Here is a 444-residue protein sequence, read N- to C-terminus: Argininosuccinate synthase (444 aa).

Residues 17–25 (AFSGGLDTS) and Ala-43 contribute to the ATP site. Residue Tyr-99 participates in L-citrulline binding. Residues Gly-129 and Thr-131 each coordinate ATP. 3 residues coordinate L-aspartate: Thr-131, Asn-135, and Asp-136. Asn-135 provides a ligand contact to L-citrulline. Residue Asp-136 participates in ATP binding. The L-citrulline site is built by Arg-139 and Ser-192. Asp-194 is a binding site for ATP. L-citrulline-binding residues include Thr-201, Glu-203, and Glu-280.

This sequence belongs to the argininosuccinate synthase family. Type 2 subfamily. In terms of assembly, homotetramer.

The protein resides in the cytoplasm. The catalysed reaction is L-citrulline + L-aspartate + ATP = 2-(N(omega)-L-arginino)succinate + AMP + diphosphate + H(+). It functions in the pathway amino-acid biosynthesis; L-arginine biosynthesis; L-arginine from L-ornithine and carbamoyl phosphate: step 2/3. The sequence is that of Argininosuccinate synthase from Burkholderia lata (strain ATCC 17760 / DSM 23089 / LMG 22485 / NCIMB 9086 / R18194 / 383).